We begin with the raw amino-acid sequence, 149 residues long: 3-dehydroquinate dehydratase (149 aa).

The active-site Proton acceptor is Y26. Substrate is bound by residues N77, H83, and D90. The active-site Proton donor is H103. Substrate-binding positions include 104–105 and R114; that span reads LS.

It belongs to the type-II 3-dehydroquinase family. Homododecamer.

It carries out the reaction 3-dehydroquinate = 3-dehydroshikimate + H2O. It functions in the pathway metabolic intermediate biosynthesis; chorismate biosynthesis; chorismate from D-erythrose 4-phosphate and phosphoenolpyruvate: step 3/7. Catalyzes a trans-dehydration via an enolate intermediate. This Edwardsiella ictaluri (strain 93-146) protein is 3-dehydroquinate dehydratase.